The sequence spans 187 residues: Small ribosomal subunit protein uS7 (187 aa).

It belongs to the universal ribosomal protein uS7 family. In terms of assembly, part of the 30S ribosomal subunit.

One of the primary rRNA binding proteins, it binds directly to 16S rRNA where it nucleates assembly of the head domain of the 30S subunit. Is located at the subunit interface close to the decoding center. The protein is Small ribosomal subunit protein uS7 of Methanosphaera stadtmanae (strain ATCC 43021 / DSM 3091 / JCM 11832 / MCB-3).